Consider the following 196-residue polypeptide: Phosphoheptose isomerase (196 aa).

Residues 31-196 (VARQFKAGNK…KAGLEAQIAV (166 aa)) form the SIS domain. Position 46-48 (46-48 (NGG)) interacts with substrate. Residues H55 and E59 each coordinate Zn(2+). Residues E59, 88 to 89 (ND), 114 to 116 (STS), S119, and Q166 each bind substrate. Zn(2+) is bound by residues Q166 and H174.

It belongs to the SIS family. GmhA subfamily. Requires Zn(2+) as cofactor.

It localises to the cytoplasm. It carries out the reaction 2 D-sedoheptulose 7-phosphate = D-glycero-alpha-D-manno-heptose 7-phosphate + D-glycero-beta-D-manno-heptose 7-phosphate. It functions in the pathway carbohydrate biosynthesis; D-glycero-D-manno-heptose 7-phosphate biosynthesis; D-glycero-alpha-D-manno-heptose 7-phosphate and D-glycero-beta-D-manno-heptose 7-phosphate from sedoheptulose 7-phosphate: step 1/1. Catalyzes the isomerization of sedoheptulose 7-phosphate in D-glycero-D-manno-heptose 7-phosphate. This Crocosphaera subtropica (strain ATCC 51142 / BH68) (Cyanothece sp. (strain ATCC 51142)) protein is Phosphoheptose isomerase.